The primary structure comprises 228 residues: Protein slowmo homolog (228 aa).

Residues 1-172 (MPLFETIKHT…TIIKVQKEAE (172 aa)) enclose the PRELI/MSF1 domain.

It belongs to the slowmo family.

The chain is Protein slowmo homolog (slmo) from Dictyostelium discoideum (Social amoeba).